A 53-amino-acid chain; its full sequence is Dihydrolipoyl dehydrogenase (53 aa).

Residues 35–44 and Lys53 each bind FAD; that span reads EKYPTFGGTC. Cys44 and Cys49 are oxidised to a cystine.

The protein belongs to the class-I pyridine nucleotide-disulfide oxidoreductase family. Homodimer. It depends on FAD as a cofactor.

The protein localises to the mitochondrion. It carries out the reaction N(6)-[(R)-dihydrolipoyl]-L-lysyl-[protein] + NAD(+) = N(6)-[(R)-lipoyl]-L-lysyl-[protein] + NADH + H(+). With respect to regulation, lipoamide reduction and the NADH -&gt; NAD reaction are both completely inhibited by copper and cadmium ions. Its function is as follows. Lipoamide dehydrogenase is a component of the glycine cleavage system as well as of the alpha-ketoacid dehydrogenase complexes. This enzyme has lipoamide dehydrogenase activity and NADH -&gt; NAD transhydrogenation activity. Also displays some NADH-ferricyanide reductase and NADPH -&gt; NAD transydrogenation activities. The polypeptide is Dihydrolipoyl dehydrogenase (Hymenolepis diminuta (Rat tapeworm)).